A 461-amino-acid polypeptide reads, in one-letter code: ATP synthase subunit beta (461 aa).

Residue 151-158 (GGAGVGKT) coordinates ATP.

The protein belongs to the ATPase alpha/beta chains family. In terms of assembly, F-type ATPases have 2 components, CF(1) - the catalytic core - and CF(0) - the membrane proton channel. CF(1) has five subunits: alpha(3), beta(3), gamma(1), delta(1), epsilon(1). CF(0) has three main subunits: a(1), b(2) and c(9-12). The alpha and beta chains form an alternating ring which encloses part of the gamma chain. CF(1) is attached to CF(0) by a central stalk formed by the gamma and epsilon chains, while a peripheral stalk is formed by the delta and b chains.

Its subcellular location is the cell inner membrane. The enzyme catalyses ATP + H2O + 4 H(+)(in) = ADP + phosphate + 5 H(+)(out). Functionally, produces ATP from ADP in the presence of a proton gradient across the membrane. The catalytic sites are hosted primarily by the beta subunits. This is ATP synthase subunit beta from Idiomarina loihiensis (strain ATCC BAA-735 / DSM 15497 / L2-TR).